A 397-amino-acid polypeptide reads, in one-letter code: 2,3-bisphosphoglycerate-independent phosphoglycerate mutase (397 aa).

Belongs to the BPG-independent phosphoglycerate mutase family. A-PGAM subfamily.

The enzyme catalyses (2R)-2-phosphoglycerate = (2R)-3-phosphoglycerate. The protein operates within carbohydrate degradation; glycolysis; pyruvate from D-glyceraldehyde 3-phosphate: step 3/5. Its function is as follows. Catalyzes the interconversion of 2-phosphoglycerate and 3-phosphoglycerate. This is 2,3-bisphosphoglycerate-independent phosphoglycerate mutase (apgM) from Methanosarcina mazei (strain ATCC BAA-159 / DSM 3647 / Goe1 / Go1 / JCM 11833 / OCM 88) (Methanosarcina frisia).